Consider the following 169-residue polypeptide: Crossover junction endodeoxyribonuclease RuvC (169 aa).

Catalysis depends on residues Asp-15, Glu-75, and Asp-147. Mg(2+)-binding residues include Asp-15, Glu-75, and Asp-147.

This sequence belongs to the RuvC family. In terms of assembly, homodimer which binds Holliday junction (HJ) DNA. The HJ becomes 2-fold symmetrical on binding to RuvC with unstacked arms; it has a different conformation from HJ DNA in complex with RuvA. In the full resolvosome a probable DNA-RuvA(4)-RuvB(12)-RuvC(2) complex forms which resolves the HJ. The cofactor is Mg(2+).

The protein localises to the cytoplasm. It catalyses the reaction Endonucleolytic cleavage at a junction such as a reciprocal single-stranded crossover between two homologous DNA duplexes (Holliday junction).. Functionally, the RuvA-RuvB-RuvC complex processes Holliday junction (HJ) DNA during genetic recombination and DNA repair. Endonuclease that resolves HJ intermediates. Cleaves cruciform DNA by making single-stranded nicks across the HJ at symmetrical positions within the homologous arms, yielding a 5'-phosphate and a 3'-hydroxyl group; requires a central core of homology in the junction. The consensus cleavage sequence is 5'-(A/T)TT(C/G)-3'. Cleavage occurs on the 3'-side of the TT dinucleotide at the point of strand exchange. HJ branch migration catalyzed by RuvA-RuvB allows RuvC to scan DNA until it finds its consensus sequence, where it cleaves and resolves the cruciform DNA. This Caulobacter sp. (strain K31) protein is Crossover junction endodeoxyribonuclease RuvC.